Reading from the N-terminus, the 946-residue chain is Protein dct-6 (946 aa).

The stretch at 326 to 363 (YMDMNDQIEQMIALLVDQLEELEKLEQLCDEVQKTGNQ) forms a coiled coil.

In terms of biological role, may have a role in tumor suppression. The protein is Protein dct-6 of Caenorhabditis briggsae.